Consider the following 157-residue polypeptide: 2-C-methyl-D-erythritol 2,4-cyclodiphosphate synthase (157 aa).

Residues aspartate 8 and histidine 10 each contribute to the a divalent metal cation site. Residues 8–10 (DIH) and 35–36 (HS) each bind 4-CDP-2-C-methyl-D-erythritol 2-phosphate. Histidine 43 provides a ligand contact to a divalent metal cation. Residues 57–59 (DIG), 62–66 (FPNND), and lysine 142 contribute to the 4-CDP-2-C-methyl-D-erythritol 2-phosphate site.

The protein belongs to the IspF family. In terms of assembly, homotrimer. A divalent metal cation is required as a cofactor.

It carries out the reaction 4-CDP-2-C-methyl-D-erythritol 2-phosphate = 2-C-methyl-D-erythritol 2,4-cyclic diphosphate + CMP. It participates in isoprenoid biosynthesis; isopentenyl diphosphate biosynthesis via DXP pathway; isopentenyl diphosphate from 1-deoxy-D-xylulose 5-phosphate: step 4/6. In terms of biological role, involved in the biosynthesis of isopentenyl diphosphate (IPP) and dimethylallyl diphosphate (DMAPP), two major building blocks of isoprenoid compounds. Catalyzes the conversion of 4-diphosphocytidyl-2-C-methyl-D-erythritol 2-phosphate (CDP-ME2P) to 2-C-methyl-D-erythritol 2,4-cyclodiphosphate (ME-CPP) with a corresponding release of cytidine 5-monophosphate (CMP). This chain is 2-C-methyl-D-erythritol 2,4-cyclodiphosphate synthase, found in Wigglesworthia glossinidia brevipalpis.